The sequence spans 219 residues: Translation initiation factor IF-3 (219 aa).

It belongs to the IF-3 family. Monomer.

The protein localises to the cytoplasm. Functionally, IF-3 binds to the 30S ribosomal subunit and shifts the equilibrium between 70S ribosomes and their 50S and 30S subunits in favor of the free subunits, thus enhancing the availability of 30S subunits on which protein synthesis initiation begins. This Prochlorococcus marinus (strain MIT 9303) protein is Translation initiation factor IF-3.